Consider the following 97-residue polypeptide: Putative membrane protein insertion efficiency factor (97 aa).

This sequence belongs to the UPF0161 family.

The protein resides in the cell membrane. Functionally, could be involved in insertion of integral membrane proteins into the membrane. The chain is Putative membrane protein insertion efficiency factor from Lactobacillus gasseri (strain ATCC 33323 / DSM 20243 / BCRC 14619 / CIP 102991 / JCM 1131 / KCTC 3163 / NCIMB 11718 / NCTC 13722 / AM63).